Reading from the N-terminus, the 312-residue chain is Tetraacyldisaccharide 4'-kinase (312 aa).

60 to 67 is a binding site for ATP; that stretch reads IAGGSGKT.

This sequence belongs to the LpxK family.

It carries out the reaction a lipid A disaccharide + ATP = a lipid IVA + ADP + H(+). The protein operates within glycolipid biosynthesis; lipid IV(A) biosynthesis; lipid IV(A) from (3R)-3-hydroxytetradecanoyl-[acyl-carrier-protein] and UDP-N-acetyl-alpha-D-glucosamine: step 6/6. Functionally, transfers the gamma-phosphate of ATP to the 4'-position of a tetraacyldisaccharide 1-phosphate intermediate (termed DS-1-P) to form tetraacyldisaccharide 1,4'-bis-phosphate (lipid IVA). This is Tetraacyldisaccharide 4'-kinase from Helicobacter pylori (strain J99 / ATCC 700824) (Campylobacter pylori J99).